Here is a 145-residue protein sequence, read N- to C-terminus: MRGLLQRVRGARVEVAGEVVGAIDQGLLVLVAVEPEDSREQADKLLHKLLNYRVFSDEQGKMNLSLKDVGGGLLLVSQFTLAADTRNGMRPSFSTAAPPALGAELFDYLLQQAKAQYADVASGRFGADMQVHLVNDGPVTFMLQI.

The Gly-cisPro motif, important for rejection of L-amino acids signature appears at 137 to 138 (GP).

This sequence belongs to the DTD family. In terms of assembly, homodimer.

Its subcellular location is the cytoplasm. It catalyses the reaction glycyl-tRNA(Ala) + H2O = tRNA(Ala) + glycine + H(+). The catalysed reaction is a D-aminoacyl-tRNA + H2O = a tRNA + a D-alpha-amino acid + H(+). In terms of biological role, an aminoacyl-tRNA editing enzyme that deacylates mischarged D-aminoacyl-tRNAs. Also deacylates mischarged glycyl-tRNA(Ala), protecting cells against glycine mischarging by AlaRS. Acts via tRNA-based rather than protein-based catalysis; rejects L-amino acids rather than detecting D-amino acids in the active site. By recycling D-aminoacyl-tRNA to D-amino acids and free tRNA molecules, this enzyme counteracts the toxicity associated with the formation of D-aminoacyl-tRNA entities in vivo and helps enforce protein L-homochirality. The chain is D-aminoacyl-tRNA deacylase from Pseudomonas putida (strain ATCC 47054 / DSM 6125 / CFBP 8728 / NCIMB 11950 / KT2440).